A 168-amino-acid chain; its full sequence is Sec-independent protein translocase protein TatB (168 aa).

Residues 1-21 (MIDLGISKLALIGAVALIVIG) traverse the membrane as a helical segment. Disordered stretches follow at residues 92–132 (FDGS…QGAR) and 146–168 (VQSG…SFFE). The segment covering 94 to 107 (GSASSSSSSDTGSG) has biased composition (low complexity). Over residues 117–126 (KSHNGRKSWR) the composition is skewed to basic residues.

Belongs to the TatB family. The Tat system comprises two distinct complexes: a TatABC complex, containing multiple copies of TatA, TatB and TatC subunits, and a separate TatA complex, containing only TatA subunits. Substrates initially bind to the TatABC complex, which probably triggers association of the separate TatA complex to form the active translocon.

The protein resides in the cell inner membrane. In terms of biological role, part of the twin-arginine translocation (Tat) system that transports large folded proteins containing a characteristic twin-arginine motif in their signal peptide across membranes. Together with TatC, TatB is part of a receptor directly interacting with Tat signal peptides. TatB may form an oligomeric binding site that transiently accommodates folded Tat precursor proteins before their translocation. The polypeptide is Sec-independent protein translocase protein TatB (Cupriavidus metallidurans (strain ATCC 43123 / DSM 2839 / NBRC 102507 / CH34) (Ralstonia metallidurans)).